The chain runs to 169 residues: Chorion protein E1 (169 aa).

A signal peptide spans 1-19; the sequence is MAWFTTVLIVASLLGSLVA. Tetradecapeptide repeat units follow at residues 114-127 and 128-141; these read GAGRGAEMEGKPRS and GAGKGAEMEGKPKS. The interval 119-169 is disordered; the sequence is AEMEGKPRSGAGKGAEMEGKPKSTESVAETNTVAAGTGVVAEKTGTESSAS. A compositionally biased stretch (polar residues) spans 142 to 152; the sequence is TESVAETNTVA.

Functionally, this protein is one of two components of the prominent 'filler' that helps mold the shape of aeropyle crowns. The protein is Chorion protein E1 of Antheraea polyphemus (Polyphemus moth).